The sequence spans 540 residues: Chaperonin GroEL (540 aa).

ATP is bound by residues 30–33, K51, 87–91, G415, and D495; these read TLGP and DGTTT.

This sequence belongs to the chaperonin (HSP60) family. Forms a cylinder of 14 subunits composed of two heptameric rings stacked back-to-back. Interacts with the co-chaperonin GroES.

Its subcellular location is the cytoplasm. The catalysed reaction is ATP + H2O + a folded polypeptide = ADP + phosphate + an unfolded polypeptide.. Functionally, together with its co-chaperonin GroES, plays an essential role in assisting protein folding. The GroEL-GroES system forms a nano-cage that allows encapsulation of the non-native substrate proteins and provides a physical environment optimized to promote and accelerate protein folding. The protein is Chaperonin GroEL of Rhodothermus marinus (Rhodothermus obamensis).